The primary structure comprises 140 residues: uncharacterized protein (140 aa).

Residues 34 to 88 (PLRWRNRARNREKPHSPRAVSSPATHSLPPSNPCRLTPTLSSARPREGSCPSKCS) are disordered.

In terms of tissue distribution, expressed in a range of cell lines, including B-cell lymphoma and prostate.

This is an uncharacterized protein from Homo sapiens (Human).